The sequence spans 348 residues: Rhodopsin (348 aa).

Position 1 is an N-acetylmethionine (Met1). The Extracellular segment spans residues 1-36 (MNGTEGPNFYVPFSNVTGVVRSPFEQPQYYLAEPWQ). 2 N-linked (GlcNAc...) asparagine glycosylation sites follow: Asn2 and Asn15. The chain crosses the membrane as a helical span at residues 37–61 (FSMLAAYMFLLIVLGFPINFLTLYV). At 62 to 73 (TVQHKKLRTPLN) the chain is on the cytoplasmic side. The chain crosses the membrane as a helical span at residues 74–96 (YILLNLAVADLFMVFGGFTTTLY). At 97 to 110 (TSLHGYFVFGPTGC) the chain is on the extracellular side. Residues Cys110 and Cys187 are joined by a disulfide bond. A helical membrane pass occupies residues 111-133 (NLEGFFATLGGEIALWSLVVLAI). The 'Ionic lock' involved in activated form stabilization motif lies at 134 to 136 (ERY). At 134–152 (ERYVVVCKPMSNFRFGENH) the chain is on the cytoplasmic side. Residues 153–173 (AIMGVVFTWIMALACAAPPLV) form a helical membrane-spanning segment. Topologically, residues 174–202 (GWSRYIPEGMQCSCGIDYYTLKPEVNNES) are extracellular. Glu201 contributes to the Zn(2+) binding site. A helical transmembrane segment spans residues 203–224 (FVIYMFVVHFTIPMIVIFFCYG). The Cytoplasmic segment spans residues 225 to 252 (QLVFTVKEAAAQQQESATTQKAEKEVTR). The helical transmembrane segment at 253 to 274 (MVIIMVIFFLICWLPYASVAFY) threads the bilayer. Topologically, residues 275 to 286 (IFTHQGSNFGPI) are extracellular. Gln279 serves as a coordination point for Zn(2+). Residues 287–308 (FMTLPAFFAKSSSIYNPVIYIM) traverse the membrane as a helical segment. Lys296 bears the N6-(retinylidene)lysine mark. At 309–348 (LNKQFRNCMLTTLCCGKNPLGDDDASATASKTETSQVAPA) the chain is on the cytoplasmic side. Residues Cys322 and Cys323 are each lipidated (S-palmitoyl cysteine). Positions 330 to 348 (DDDASATASKTETSQVAPA) are interaction with SAG. Position 334 is a phosphoserine (Ser334). At Thr336 the chain carries Phosphothreonine. A Phosphoserine modification is found at Ser338. Phosphothreonine occurs at positions 340 and 342. Ser343 bears the Phosphoserine mark.

It belongs to the G-protein coupled receptor 1 family. Opsin subfamily. Homodimer. May form a complex composed of RHO, GRK1 and RCVRN in a Ca(2+)-dependent manner; RCVRN prevents the interaction between GRK1 and RHO. Interacts with GRK1. Interacts (phosphorylated form) with SAG. Interacts with GNAT1. Interacts with GNAT3. SAG and G-proteins compete for a common binding site. Interacts with PRCD; the interaction promotes PRCD stability. Forms a complex with ASAP1 and ARF4. Forms a complex with ASAP1, RAB11A, Rabin8/RAB3IP, ARF4 and RAB11FIP3; the complex regulates Golgi-to-cilia rhodopsin/RHO transport in photoreceptors. Phosphorylated on some or all of the serine and threonine residues present in the C-terminal region. Post-translationally, contains one covalently linked retinal chromophore. Upon light absorption, the covalently bound 11-cis-retinal is converted to all-trans-retinal. After hydrolysis of the Schiff base and release of the covalently bound all-trans-retinal, active rhodopsin is regenerated by binding of a fresh molecule of 11-cis-retinal. In terms of tissue distribution, rod-shaped photoreceptor cells in the retina (at protein level).

Its subcellular location is the membrane. It is found in the cell projection. The protein localises to the cilium. It localises to the photoreceptor outer segment. Photoreceptor required for image-forming vision at low light intensity. Required for photoreceptor cell viability after birth. Light-induced isomerization of 11-cis to all-trans retinal triggers a conformational change that activates signaling via G-proteins. Subsequent receptor phosphorylation mediates displacement of the bound G-protein alpha subunit by the arrestin SAG and terminates signaling. The polypeptide is Rhodopsin (Rho) (Mus musculus (Mouse)).